Here is a 256-residue protein sequence, read N- to C-terminus: Probable ABC transporter ATP-binding protein spyM18_0273 (256 aa).

An ABC transporter domain is found at 4-246; the sequence is LEINNLHVSI…EKEGYAGIAQ (243 aa). 36 to 43 serves as a coordination point for ATP; sequence GPNGTGKS.

Belongs to the ABC transporter superfamily. Ycf16 family.

The protein localises to the cell membrane. In Streptococcus pyogenes serotype M18 (strain MGAS8232), this protein is Probable ABC transporter ATP-binding protein spyM18_0273.